Here is a 349-residue protein sequence, read N- to C-terminus: tRNA uridine(34) hydroxylase (349 aa).

In terms of domain architecture, Rhodanese spans D146–L240. The active-site Cysteine persulfide intermediate is the C200. The span at P314 to G328 shows a compositional bias: basic and acidic residues. Positions P314–E349 are disordered.

Belongs to the TrhO family.

It catalyses the reaction uridine(34) in tRNA + AH2 + O2 = 5-hydroxyuridine(34) in tRNA + A + H2O. Its function is as follows. Catalyzes oxygen-dependent 5-hydroxyuridine (ho5U) modification at position 34 in tRNAs. This Cronobacter sakazakii (strain ATCC BAA-894) (Enterobacter sakazakii) protein is tRNA uridine(34) hydroxylase.